We begin with the raw amino-acid sequence, 71 residues long: DNA-directed RNA polymerases II, IV and V subunit 10 (71 aa).

Zn(2+)-binding residues include cysteine 7, cysteine 10, cysteine 44, and cysteine 45.

Belongs to the archaeal Rpo10/eukaryotic RPB10 RNA polymerase subunit family. In terms of assembly, component of the RNA polymerase II, IV and V complexes. Interacts with NRPD1.

It is found in the nucleus. In terms of biological role, DNA-dependent RNA polymerase catalyzes the transcription of DNA into RNA using the four ribonucleoside triphosphates as substrates. Component of RNA polymerase II which synthesizes mRNA precursors and many functional non-coding RNAs. Pol II is the central component of the basal RNA polymerase II transcription machinery. It is composed of mobile elements that move relative to each other. Component of RNA polymerases IV and V which mediate short-interfering RNAs (siRNA) accumulation and subsequent RNA-directed DNA methylation-dependent (RdDM) transcriptional gene silencing (TGS) of endogenous repeated sequences, including transposable elements. The sequence is that of DNA-directed RNA polymerases II, IV and V subunit 10 (NRPB10) from Arabidopsis thaliana (Mouse-ear cress).